Consider the following 92-residue polypeptide: Exodeoxyribonuclease 7 small subunit (92 aa).

The span at 71 to 84 (AESAGTAKSAVAAD) shows a compositional bias: low complexity. Residues 71–92 (AESAGTAKSAVAADSRGAADSA) form a disordered region.

It belongs to the XseB family. Heterooligomer composed of large and small subunits.

The protein localises to the cytoplasm. The enzyme catalyses Exonucleolytic cleavage in either 5'- to 3'- or 3'- to 5'-direction to yield nucleoside 5'-phosphates.. In terms of biological role, bidirectionally degrades single-stranded DNA into large acid-insoluble oligonucleotides, which are then degraded further into small acid-soluble oligonucleotides. The sequence is that of Exodeoxyribonuclease 7 small subunit from Leifsonia xyli subsp. xyli (strain CTCB07).